Here is a 144-residue protein sequence, read N- to C-terminus: L-fucose mutarotase (144 aa).

The Proton donor role is filled by histidine 22. Residues aspartate 30, arginine 109, and 131-133 (YGN) contribute to the substrate site.

Belongs to the RbsD / FucU family. FucU mutarotase subfamily. As to quaternary structure, homodecamer.

It is found in the cytoplasm. It carries out the reaction alpha-L-fucose = beta-L-fucose. It participates in carbohydrate metabolism; L-fucose metabolism. In terms of biological role, involved in the anomeric conversion of L-fucose. The sequence is that of L-fucose mutarotase from Histophilus somni (strain 2336) (Haemophilus somnus).